Reading from the N-terminus, the 244-residue chain is Type III pantothenate kinase (244 aa).

An ATP-binding site is contributed by Val-12 to Arg-19. Substrate-binding positions include Tyr-79 and Gly-83–Arg-86. The active-site Proton acceptor is Asp-85. Asp-105 contributes to the K(+) binding site. Thr-108 lines the ATP pocket. Residue Thr-163 coordinates substrate.

Belongs to the type III pantothenate kinase family. As to quaternary structure, homodimer. The cofactor is NH4(+). It depends on K(+) as a cofactor.

It localises to the cytoplasm. The enzyme catalyses (R)-pantothenate + ATP = (R)-4'-phosphopantothenate + ADP + H(+). Its pathway is cofactor biosynthesis; coenzyme A biosynthesis; CoA from (R)-pantothenate: step 1/5. Its function is as follows. Catalyzes the phosphorylation of pantothenate (Pan), the first step in CoA biosynthesis. The chain is Type III pantothenate kinase from Synechococcus sp. (strain JA-3-3Ab) (Cyanobacteria bacterium Yellowstone A-Prime).